Reading from the N-terminus, the 151-residue chain is Calmodulin-like protein 9 (151 aa).

EF-hand domains lie at 8 to 43, 44 to 79, 81 to 116, and 117 to 151; these read EQIQ…MGKN, PKAE…NTSQ, SASD…MGMK, and ITAE…AASY. 8 residues coordinate Ca(2+): aspartate 94, aspartate 96, aspartate 98, glutamate 105, aspartate 130, aspartate 132, aspartate 134, and glutamate 141.

It belongs to the calmodulin family. As to quaternary structure, interacts with IQD1. Interacts with ILK1. Binds to ABCG36. In terms of tissue distribution, expressed in leaves, flowers and siliques.

Potential calcium sensor. In Arabidopsis thaliana (Mouse-ear cress), this protein is Calmodulin-like protein 9.